Here is a 1258-residue protein sequence, read N- to C-terminus: Serine/threonine-protein kinase Nek1 (1258 aa).

Residues 4–258 form the Protein kinase domain; that stretch reads YVRLQKIGEG…VNSILEKGFI (255 aa). Residues 10–18 and lysine 33 contribute to the ATP site; that span reads IGEGSFGKA. Catalysis depends on aspartate 128, which acts as the Proton acceptor. At threonine 156 the chain carries Phosphothreonine. Residue threonine 162 is modified to Phosphothreonine; by autocatalysis. The tract at residues 330 to 360 is disordered; the sequence is HEKKPLQKHKQAHQTPEKRVNTGEERRKISE. The span at 344–360 shows a compositional bias: basic and acidic residues; the sequence is TPEKRVNTGEERRKISE. Phosphoserine occurs at positions 414, 418, 428, and 438. 3 disordered regions span residues 578 to 600, 648 to 669, and 685 to 704; these read KLRG…EADM, KSSD…SKQQ, and VDSS…KTNN. Residues 579 to 591 are compositionally biased toward basic and acidic residues; it reads LRGEKKEANHSEG. Serine 653 is modified (phosphoserine). Residue threonine 661 is modified to Phosphothreonine. A Phosphoserine modification is found at serine 664. Basic and acidic residues predominate over residues 691–700; sequence DTRETSEEMQ. Phosphoserine occurs at positions 798, 834, 868, 881, 1052, and 1126. The interval 1118-1171 is disordered; sequence REQPGEEYSEEEESVLKNSDVEPTANGTDVADEDDNPSSESALNEEWHSDNSDG.

Belongs to the protein kinase superfamily. NEK Ser/Thr protein kinase family. NIMA subfamily. Binds to CBY2. Found in a complex with CFAP410, NEK1 and SPATA7. Interacts with CFAP410. Interacts (via Ser-1052 phosphorylated form) with 14-3-3 proteins. It depends on Mg(2+) as a cofactor. As to expression, high fetal expression in the brain and kidney.

The protein resides in the nucleus. It localises to the cytoplasm. It is found in the cytoskeleton. Its subcellular location is the microtubule organizing center. The protein localises to the centrosome. It catalyses the reaction L-seryl-[protein] + ATP = O-phospho-L-seryl-[protein] + ADP + H(+). The catalysed reaction is L-threonyl-[protein] + ATP = O-phospho-L-threonyl-[protein] + ADP + H(+). In terms of biological role, phosphorylates serines and threonines, but also appears to possess tyrosine kinase activity. Involved in DNA damage checkpoint control and for proper DNA damage repair. In response to injury that includes DNA damage, NEK1 phosphorylates VDAC1 to limit mitochondrial cell death. May be implicated in the control of meiosis. Involved in cilium assembly. The protein is Serine/threonine-protein kinase Nek1 (NEK1) of Homo sapiens (Human).